Consider the following 274-residue polypeptide: HMP-PP phosphatase (274 aa).

The active-site Nucleophile is aspartate 8. Aspartate 8, aspartate 10, and aspartate 213 together coordinate Mg(2+).

The protein belongs to the HAD-like hydrolase superfamily. Cof family. Requires Mg(2+) as cofactor.

The enzyme catalyses 4-amino-2-methyl-5-(diphosphooxymethyl)pyrimidine + H2O = 4-amino-2-methyl-5-(phosphooxymethyl)pyrimidine + phosphate + H(+). Its function is as follows. Catalyzes the hydrolysis of 4-amino-2-methyl-5-hydroxymethylpyrimidine pyrophosphate (HMP-PP) to 4-amino-2-methyl-5-hydroxymethylpyrimidine phosphate (HMP-P). The chain is HMP-PP phosphatase from Serratia proteamaculans (strain 568).